Consider the following 299-residue polypeptide: Pentalenolactone F synthase (299 aa).

Residues histidine 105 and aspartate 107 each coordinate Fe cation. Positions 133 and 251 each coordinate 2-oxoglutarate. Histidine 266 is a binding site for Fe cation. Arginine 277 serves as a coordination point for 2-oxoglutarate.

It belongs to the TfdA dioxygenase family. Fe(2+) is required as a cofactor.

The catalysed reaction is pentalenolactone D + 2 2-oxoglutarate + 2 O2 = pentalenolactone F + 2 succinate + 2 CO2 + H2O. The protein operates within antibiotic biosynthesis; pentalenolactone biosynthesis. Its activity is regulated as follows. Activated by ascorbate. Its function is as follows. Catalyzes the Fe(2+) and alpha-ketoglutarate-dependent oxidation of pentalenolactone D to pentalenolactone F in the biosynthesis of pentalenolactone antibiotic. Also able to catalyze the oxidation of pentalenolactone D to pentalenolactone E. The protein is Pentalenolactone F synthase (pntD) of Streptomyces arenae.